A 398-amino-acid polypeptide reads, in one-letter code: Acetate kinase (398 aa).

A Mg(2+)-binding site is contributed by Asn-9. ATP is bound at residue Lys-16. Residue Arg-93 coordinates substrate. Catalysis depends on Asp-150, which acts as the Proton donor/acceptor. Residues 209–213 (HLGAG), 284–286 (DMR), and 329–333 (GIGEH) contribute to the ATP site. Glu-382 is a binding site for Mg(2+).

It belongs to the acetokinase family. Homodimer. Requires Mg(2+) as cofactor. Mn(2+) is required as a cofactor.

It localises to the cytoplasm. It catalyses the reaction acetate + ATP = acetyl phosphate + ADP. It participates in metabolic intermediate biosynthesis; acetyl-CoA biosynthesis; acetyl-CoA from acetate: step 1/2. Catalyzes the formation of acetyl phosphate from acetate and ATP. Can also catalyze the reverse reaction. This is Acetate kinase from Rhodopseudomonas palustris (strain TIE-1).